The primary structure comprises 176 residues: Large ribosomal subunit protein uL10 (176 aa).

It belongs to the universal ribosomal protein uL10 family. In terms of assembly, part of the ribosomal stalk of the 50S ribosomal subunit. The N-terminus interacts with L11 and the large rRNA to form the base of the stalk. The C-terminus forms an elongated spine to which L12 dimers bind in a sequential fashion forming a multimeric L10(L12)X complex.

Its function is as follows. Forms part of the ribosomal stalk, playing a central role in the interaction of the ribosome with GTP-bound translation factors. The protein is Large ribosomal subunit protein uL10 of Streptomyces avermitilis (strain ATCC 31267 / DSM 46492 / JCM 5070 / NBRC 14893 / NCIMB 12804 / NRRL 8165 / MA-4680).